Here is a 144-residue protein sequence, read N- to C-terminus: Small ribosomal subunit protein uS11 (144 aa).

The tract at residues 123–144 (EDVTPVPTDSTRRKGSRRGRRL) is disordered. The segment covering 135 to 144 (RKGSRRGRRL) has biased composition (basic residues).

Belongs to the universal ribosomal protein uS11 family.

The sequence is that of Small ribosomal subunit protein uS11 (RPS14) from Trypanosoma brucei brucei.